The primary structure comprises 482 residues: tRNA sulfurtransferase (482 aa).

The region spanning leucine 61–arginine 165 is the THUMP domain. Residues leucine 183–isoleucine 184, lysine 265, glycine 287, and glutamine 296 contribute to the ATP site. Cysteine 344 and cysteine 456 are disulfide-bonded. The Rhodanese domain maps to phenylalanine 404–proline 482. Cysteine 456 acts as the Cysteine persulfide intermediate in catalysis.

The protein belongs to the ThiI family.

The protein localises to the cytoplasm. The enzyme catalyses [ThiI sulfur-carrier protein]-S-sulfanyl-L-cysteine + a uridine in tRNA + 2 reduced [2Fe-2S]-[ferredoxin] + ATP + H(+) = [ThiI sulfur-carrier protein]-L-cysteine + a 4-thiouridine in tRNA + 2 oxidized [2Fe-2S]-[ferredoxin] + AMP + diphosphate. The catalysed reaction is [ThiS sulfur-carrier protein]-C-terminal Gly-Gly-AMP + S-sulfanyl-L-cysteinyl-[cysteine desulfurase] + AH2 = [ThiS sulfur-carrier protein]-C-terminal-Gly-aminoethanethioate + L-cysteinyl-[cysteine desulfurase] + A + AMP + 2 H(+). Its pathway is cofactor biosynthesis; thiamine diphosphate biosynthesis. In terms of biological role, catalyzes the ATP-dependent transfer of a sulfur to tRNA to produce 4-thiouridine in position 8 of tRNAs, which functions as a near-UV photosensor. Also catalyzes the transfer of sulfur to the sulfur carrier protein ThiS, forming ThiS-thiocarboxylate. This is a step in the synthesis of thiazole, in the thiamine biosynthesis pathway. The sulfur is donated as persulfide by IscS. This Shigella flexneri protein is tRNA sulfurtransferase.